The primary structure comprises 164 residues: MRLTSKGRYAVTAMLDVALHSQEGPVPLADISERQGISLSYLEQLFSRLRKNGLVASVRGPGGGYLLGKDASEIAVGAVITAVDESVDATRCQGKEGCQGGDRCLTHTLWRDLSERISGFLNNITLAELVNNQDVLVVADRQNNDTRRTANGRPQETINVNLRA.

Residues 2–131 (RLTSKGRYAV…NNITLAELVN (130 aa)) enclose the HTH rrf2-type domain. The segment at residues 28–51 (LADISERQGISLSYLEQLFSRLRK) is a DNA-binding region (H-T-H motif). [2Fe-2S] cluster is bound by residues Cys92, Cys98, and Cys104. Residues Cys92, Cys98, and Cys104 each contribute to the a metal cation site. The interval 145-164 (DTRRTANGRPQETINVNLRA) is disordered. Polar residues predominate over residues 152-164 (GRPQETINVNLRA).

Requires [2Fe-2S] cluster as cofactor.

Functionally, regulates the transcription of several operons and genes involved in the biogenesis of Fe-S clusters and Fe-S-containing proteins. The polypeptide is HTH-type transcriptional regulator IscR (Serratia proteamaculans (strain 568)).